Consider the following 156-residue polypeptide: Ribosomal RNA large subunit methyltransferase H (156 aa).

S-adenosyl-L-methionine-binding positions include L73, G104, and 123–128 (LSRLTL).

The protein belongs to the RNA methyltransferase RlmH family. In terms of assembly, homodimer.

It is found in the cytoplasm. The catalysed reaction is pseudouridine(1915) in 23S rRNA + S-adenosyl-L-methionine = N(3)-methylpseudouridine(1915) in 23S rRNA + S-adenosyl-L-homocysteine + H(+). Specifically methylates the pseudouridine at position 1915 (m3Psi1915) in 23S rRNA. The chain is Ribosomal RNA large subunit methyltransferase H from Thiobacillus denitrificans (strain ATCC 25259 / T1).